Reading from the N-terminus, the 305-residue chain is Acetylglutamate kinase (305 aa).

Substrate-binding positions include 67–68, Arg-89, and Asn-190; that span reads GG.

This sequence belongs to the acetylglutamate kinase family. ArgB subfamily.

Its subcellular location is the cytoplasm. The enzyme catalyses N-acetyl-L-glutamate + ATP = N-acetyl-L-glutamyl 5-phosphate + ADP. The protein operates within amino-acid biosynthesis; L-arginine biosynthesis; N(2)-acetyl-L-ornithine from L-glutamate: step 2/4. In terms of biological role, catalyzes the ATP-dependent phosphorylation of N-acetyl-L-glutamate. This Bifidobacterium animalis subsp. lactis (strain AD011) protein is Acetylglutamate kinase.